The sequence spans 360 residues: GTPase Obg (360 aa).

The Obg domain occupies 1 to 156 (MFVDSVEIII…KCVRLELKLI (156 aa)). One can recognise an OBG-type G domain in the interval 157-360 (ADIGLVGFPN…LKFVLLEALP (204 aa)). GTP-binding positions include 163–170 (GFPNAGKS), 188–192 (FTTLV), 210–213 (DIPG), 279–282 (NKCD), and 341–343 (SAV). Positions 170 and 190 each coordinate Mg(2+).

Belongs to the TRAFAC class OBG-HflX-like GTPase superfamily. OBG GTPase family. Monomer. Mg(2+) is required as a cofactor.

The protein resides in the cytoplasm. Functionally, an essential GTPase which binds GTP, GDP and possibly (p)ppGpp with moderate affinity, with high nucleotide exchange rates and a fairly low GTP hydrolysis rate. Plays a role in control of the cell cycle, stress response, ribosome biogenesis and in those bacteria that undergo differentiation, in morphogenesis control. This Helicobacter pylori (strain ATCC 700392 / 26695) (Campylobacter pylori) protein is GTPase Obg.